A 129-amino-acid chain; its full sequence is Photosystem II reaction center Psb28 protein (129 aa).

The disordered stretch occupies residues 110-129 (GLGYSNNSGNNEGADEASEG).

The protein belongs to the Psb28 family. Part of the photosystem II complex.

Its subcellular location is the cellular thylakoid membrane. The polypeptide is Photosystem II reaction center Psb28 protein (Synechococcus sp. (strain WH7803)).